Here is a 259-residue protein sequence, read N- to C-terminus: Histidinol-phosphatase (259 aa).

The Mg(2+) site is built by Glu66, Asp82, Ile84, Asp85, and Asp207. Substrate is bound at residue Glu66. Residues 84-87 (IDGT) and Asp207 contribute to the substrate site.

It belongs to the inositol monophosphatase superfamily. It depends on Mg(2+) as a cofactor.

It carries out the reaction L-histidinol phosphate + H2O = L-histidinol + phosphate. Its pathway is amino-acid biosynthesis; L-histidine biosynthesis; L-histidine from 5-phospho-alpha-D-ribose 1-diphosphate: step 8/9. Catalyzes the dephosphorylation of histidinol-phosphate to histidinol, the direct precursor of histidine. This Chlorobaculum parvum (strain DSM 263 / NCIMB 8327) (Chlorobium vibrioforme subsp. thiosulfatophilum) protein is Histidinol-phosphatase (hisN).